The sequence spans 391 residues: Protein-glutamate methylesterase/protein-glutamine glutaminase (391 aa).

A Response regulatory domain is found at 4–121 (KVLVVDDSSF…ARNNEDAIKL (118 aa)). The residue at position 55 (Asp55) is a 4-aspartylphosphate. One can recognise a CheB-type methylesterase domain in the interval 197 to 391 (SGKHYQLVAI…IRLKTEVGCG (195 aa)). Catalysis depends on residues Ser209, His236, and Asp333.

Belongs to the CheB family. Post-translationally, phosphorylated by CheA. Phosphorylation of the N-terminal regulatory domain activates the methylesterase activity.

It is found in the cytoplasm. It carries out the reaction [protein]-L-glutamate 5-O-methyl ester + H2O = L-glutamyl-[protein] + methanol + H(+). The catalysed reaction is L-glutaminyl-[protein] + H2O = L-glutamyl-[protein] + NH4(+). Functionally, involved in chemotaxis. Part of a chemotaxis signal transduction system that modulates chemotaxis in response to various stimuli. Catalyzes the demethylation of specific methylglutamate residues introduced into the chemoreceptors (methyl-accepting chemotaxis proteins or MCP) by CheR. Also mediates the irreversible deamidation of specific glutamine residues to glutamic acid. This Pseudoalteromonas translucida (strain TAC 125) protein is Protein-glutamate methylesterase/protein-glutamine glutaminase.